Reading from the N-terminus, the 358-residue chain is MADSTSMDHDGEQRGTKRKRDAGAGGSGAGIGKGTSNYVKEGYGPNMSEMVPRNIMNKGNHTVYHVVKQQKYLDFNYVSNQNPYIIPYQTAGFWASMWDQTDIGSNNTINIMKALNNVSVGVTWIKGEITFEVYAVTRQRLLTGTTNQTTWDFETSQNMFIADADREPENFNLATAAATGPLAQQTTQTLLFNANNDRYTKYELPQRNQYTREYDFQQLTNNYMWKPTDISAAANFRRLIPMAEGVYTTTAATTKMAELTEQKSVYAGSGKTTEASLFRNRTSYPRMHMAQPQVPDETGYMKFRYQVRMSTKLHLVFHLYPDYSTSTNIEYMGRQVLELPEVTATGGVVTCMPYEIKT.

A compositionally biased stretch (basic and acidic residues) spans 1–15; sequence MADSTSMDHDGEQRG. Positions 1–37 are disordered; that stretch reads MADSTSMDHDGEQRGTKRKRDAGAGGSGAGIGKGTSN. A compositionally biased stretch (gly residues) spans 23 to 33; it reads GAGGSGAGIGK.

The protein localises to the virion. Capsid protein self-assembles to form an icosahedral capsid with a T=1 symmetry, about 22 nm in diameter, and consisting of 60 copies of size variants of the capsid proteins, which differ in the N-terminushe capsid encapsulates the genomic ssDNA. Capsid proteins are responsible for the attachment to host cell receptors. This attachment induces virion internalization predominantly through clathrin-dependent endocytosis. This Aedes (Aedes densovirus) protein is Capsid protein VP1/VP2 (VP).